A 559-amino-acid polypeptide reads, in one-letter code: Urocanate hydratase (559 aa).

Residues 49–50 (GG), glutamine 127, 173–175 (GMG), aspartate 193, arginine 198, 239–240 (NA), 260–264 (QTSAH), 270–271 (YL), and tyrosine 319 contribute to the NAD(+) site. The active site involves cysteine 407. Residue glycine 489 coordinates NAD(+).

Belongs to the urocanase family. NAD(+) is required as a cofactor.

It localises to the cytoplasm. It catalyses the reaction 4-imidazolone-5-propanoate = trans-urocanate + H2O. It participates in amino-acid degradation; L-histidine degradation into L-glutamate; N-formimidoyl-L-glutamate from L-histidine: step 2/3. Its function is as follows. Catalyzes the conversion of urocanate to 4-imidazolone-5-propionate. This is Urocanate hydratase from Shouchella clausii (strain KSM-K16) (Alkalihalobacillus clausii).